Here is a 380-residue protein sequence, read N- to C-terminus: Aprataxin (380 aa).

Positions 36–85 constitute an FHA-like domain; sequence PVIIGRTPELGITDKLCSRSQLELTSNCYKRYVLVKRLGANTSQINGIDI. The segment at 176–207 is disordered; it reads VYAFDSPSPMSSRCEKKAESNKRAPTHKHWSQ. A compositionally biased stretch (basic and acidic residues) spans 188-197; the sequence is RCEKKAESNK. The HIT domain maps to 206–312; that stretch reads SQGLKASMED…ISQDFQSSSF (107 aa). Interaction with DNA substrate stretches follow at residues 231 to 235 and 294 to 295; these read DKYPK and SM. The short motif at 297–301 is the Histidine triad motif element; it reads QMHMH. Histidine 299 acts as the Tele-AMP-histidine intermediate in catalysis. The segment at 356–378 adopts a C2H2-type; atypical zinc-finger fold; that stretch reads LKCHRCKKPQKNIPTLKKHIDSC.

The protein resides in the nucleus. Its subcellular location is the nucleoplasm. It localises to the nucleolus. The catalysed reaction is a 5'-end adenosine-5'-diphospho-5'-2'-deoxyribonucleoside-DNA + H2O = a 5'-end 5'-phospho-2'-deoxyribonucleoside-DNA + AMP + 2 H(+). It carries out the reaction a 5'-end adenosine-5'-diphospho-5'-ribonucleoside-2'-deoxyribonucleotide-DNA + H2O = a 5'-end 5'-phospho-ribonucleoside-2'-deoxyribonucleotide-DNA + AMP + 2 H(+). The enzyme catalyses a 3'-end 2'-deoxyribonucleotide-3'-diphospho-5'-guanosine-DNA + H2O = a 3'-end 2'-deoxyribonucleotide 3'-phosphate-DNA + GMP + 2 H(+). Functionally, DNA-binding protein involved in single-strand DNA break repair, double-strand DNA break repair and base excision repair. Resolves abortive DNA ligation intermediates formed either at base excision sites, or when DNA ligases attempt to repair non-ligatable breaks induced by reactive oxygen species. Catalyzes the release of adenylate groups covalently linked to 5'-phosphate termini, resulting in the production of 5'-phosphate termini that can be efficiently rejoined. Also able to hydrolyze adenosine 5'-monophosphoramidate (AMP-NH(2)) and diadenosine tetraphosphate (AppppA), but with lower catalytic activity. Likewise, catalyzes the release of 3'-linked guanosine (DNAppG) and inosine (DNAppI) from DNA, but has higher specific activity with 5'-linked adenosine (AppDNA). In Ciona intestinalis (Transparent sea squirt), this protein is Aprataxin (APTX).